The primary structure comprises 240 residues: tRNA1(Val) (adenine(37)-N6)-methyltransferase (240 aa).

This sequence belongs to the methyltransferase superfamily. tRNA (adenine-N(6)-)-methyltransferase family.

It localises to the cytoplasm. It carries out the reaction adenosine(37) in tRNA1(Val) + S-adenosyl-L-methionine = N(6)-methyladenosine(37) in tRNA1(Val) + S-adenosyl-L-homocysteine + H(+). Its function is as follows. Specifically methylates the adenine in position 37 of tRNA(1)(Val) (anticodon cmo5UAC). The polypeptide is tRNA1(Val) (adenine(37)-N6)-methyltransferase (Photobacterium profundum (strain SS9)).